The following is a 175-amino-acid chain: NADH-quinone oxidoreductase subunit I (175 aa).

2 4Fe-4S ferredoxin-type domains span residues 69-98 (KRDE…IEAA) and 115-144 (KKFE…LDGP). Positions 78, 81, 84, 88, 124, 127, 130, and 134 each coordinate [4Fe-4S] cluster.

The protein belongs to the complex I 23 kDa subunit family. NDH-1 is composed of 14 different subunits. Subunits NuoA, H, J, K, L, M, N constitute the membrane sector of the complex. [4Fe-4S] cluster is required as a cofactor.

Its subcellular location is the cell inner membrane. It catalyses the reaction a quinone + NADH + 5 H(+)(in) = a quinol + NAD(+) + 4 H(+)(out). Its function is as follows. NDH-1 shuttles electrons from NADH, via FMN and iron-sulfur (Fe-S) centers, to quinones in the respiratory chain. The immediate electron acceptor for the enzyme in this species is believed to be ubiquinone. Couples the redox reaction to proton translocation (for every two electrons transferred, four hydrogen ions are translocated across the cytoplasmic membrane), and thus conserves the redox energy in a proton gradient. The chain is NADH-quinone oxidoreductase subunit I from Leptospira interrogans serogroup Icterohaemorrhagiae serovar Lai (strain 56601).